A 346-amino-acid chain; its full sequence is DNA-directed RNA polymerases I and III subunit RPAC1 (346 aa).

An N-acetylalanine modification is found at Ala-2.

Belongs to the archaeal Rpo3/eukaryotic RPB3 RNA polymerase subunit family. As to quaternary structure, component of the RNA polymerase I and RNA polymerase III complexes consisting of at least 13 and 17 subunits, respectively. Pol I complex consists of a ten-subunit catalytic core composed of POLR1A/RPA1, POLR1B/RPA2, POLR1C/RPAC1, POLR1D/RPAC2, POLR1H/RPA12, POLR2E/RPABC1, POLR2F/RPABC2, POLR2H/RPABC3, POLR2K/RPABC4 and POLR2L/RPABC5; a mobile stalk subunit POLR1F/RPA43 protruding from the core and additional subunits homologous to general transcription factors POLR1E/RPA49 and POLR1G/RPA34. Part of Pol I pre-initiation complex (PIC), in which Pol I core assembles with RRN3 and promoter-bound UTBF and SL1/TIF-IB complex. Pol III complex consists of a ten-subunit catalytic core composed of POLR3A/RPC1, POLR3B/RPC2, POLR1C/RPAC1, POLR1D/RPAC2, POLR3K/RPC10, POLR2E/RPABC1, POLR2F/RPABC2, POLR2H/RPABC3, POLR2K/RPABC4 and POLR2L/RPABC5; a mobile stalk composed of two subunits POLR3H/RPC8 and CRCP/RPC9, protruding from the core and functioning primarily in transcription initiation; and additional subunits homologous to general transcription factors of the RNA polymerase II machinery, POLR3C/RPC3-POLR3F/RPC6-POLR3G/RPC7 heterotrimer required for transcription initiation and POLR3D/RPC4-POLR3E/RPC5 heterodimer involved in both transcription initiation and termination.

It is found in the nucleus. The protein localises to the cytoplasm. It localises to the cytosol. In terms of biological role, DNA-dependent RNA polymerase catalyzes the transcription of DNA into RNA using the four ribonucleoside triphosphates as substrates. Common component of RNA polymerases I and III which synthesize ribosomal RNA precursors and short non-coding RNAs including 5S rRNA, snRNAs, tRNAs and miRNAs, respectively. POLR1C/RPAC1 is part of the polymerase core and may function as a clamp element that moves to open and close the cleft. In Bos taurus (Bovine), this protein is DNA-directed RNA polymerases I and III subunit RPAC1 (POLR1C).